The sequence spans 188 residues: MGSIEEVLLEERLIGYLDPGAEKVLARINRPSKIVSTSSCTGRITLIEGEAHWLRNGARVAYKTHHPISRSEVERVLRRGFTNLWLKVTGPILHLRVEGWQCAKSLLEAARRNGFKHSGVISIAEDSRLVIEIMSSQSMSVPLVMEGARIVGDDALDMLIEKANTILVESRIGLDTFSREVEELVECF.

Belongs to the TYW3 family.

The catalysed reaction is 4-demethyl-7-[(3S)-3-amino-3-carboxypropyl]wyosine(37) in tRNA(Phe) + S-adenosyl-L-methionine = 7-[(3S)-3-amino-3-carboxypropyl]wyosine(37) in tRNA(Phe) + S-adenosyl-L-homocysteine + H(+). S-adenosyl-L-methionine-dependent methyltransferase that acts as a component of the wyosine derivatives biosynthesis pathway. Probably methylates N-4 position of wybutosine-86 to produce wybutosine-72. In Aeropyrum pernix (strain ATCC 700893 / DSM 11879 / JCM 9820 / NBRC 100138 / K1), this protein is tRNA(Phe) 7-((3-amino-3-carboxypropyl)-4-demethylwyosine(37)-N(4))-methyltransferase.